Consider the following 298-residue polypeptide: Tyrosine recombinase XerC (298 aa).

One can recognise a Core-binding (CB) domain in the interval 2 to 88; sequence TDLHTDVERY…ALRSFFDWLV (87 aa). The Tyr recombinase domain maps to 109 to 288; sequence HLPKNIDVDD…DFQHLASVYD (180 aa). Catalysis depends on residues arginine 148, lysine 172, histidine 240, arginine 243, and histidine 266. The O-(3'-phospho-DNA)-tyrosine intermediate role is filled by tyrosine 275.

This sequence belongs to the 'phage' integrase family. XerC subfamily. As to quaternary structure, forms a cyclic heterotetrameric complex composed of two molecules of XerC and two molecules of XerD, in which XerC interacts with XerD via its C-terminal region, XerD interacts with XerC via its C-terminal region and so on.

The protein resides in the cytoplasm. FtsK may regulate the catalytic switch between XerC and XerD in the heterotetrameric complex during the two steps of the recombination process. Functionally, site-specific tyrosine recombinase, which acts by catalyzing the cutting and rejoining of the recombining DNA molecules. Binds cooperatively to specific DNA consensus sequences that are separated from XerD binding sites by a short central region, forming the heterotetrameric XerC-XerD complex that recombines DNA substrates. The complex is essential to convert dimers of the bacterial chromosome into monomers to permit their segregation at cell division. It also contributes to the segregational stability of plasmids. In the complex XerC specifically exchanges the top DNA strands. In Escherichia coli O157:H7, this protein is Tyrosine recombinase XerC.